The primary structure comprises 602 residues: Leucine-rich repeat-containing protein 40 (602 aa).

The segment at 1–26 (MSRHMRAPRFDPRAGFHAEGKDRGPS) is disordered. Over residues 8 to 24 (PRFDPRAGFHAEGKDRG) the composition is skewed to basic and acidic residues. An LRR 1 repeat occupies 35 to 58 (ARSSGQLNLAGRNLGEVPQCVWRI). At Ser71 the chain carries Phosphoserine. 20 LRR repeats span residues 81–103 (QTDL…DLRL), 104–126 (LPAL…AIRE), 127–149 (LDNL…EITS), 150–172 (LKNL…GFEH), 174–195 (SCLE…DFAL), 196–219 (LSSL…ISRM), 221–241 (RLKH…DVGS), 242–266 (MESL…SCRQ), 268–287 (KELH…HLQH), 288–310 (LQAI…EMAL), 311–334 (LQSL…LGNL), 336–356 (LKFL…IIAK), 398–421 (IATL…LFDA), 424–447 (TTLI…IVEL), 449–470 (EMVL…ELCL), 471–494 (LQKL…MSSL), 496–517 (KLQT…LYRI), 519–540 (TLEA…KMKL), 541–564 (MENL…LGNC), and 566–587 (QLRT…ILMK).

This Mus musculus (Mouse) protein is Leucine-rich repeat-containing protein 40 (Lrrc40).